Here is a 234-residue protein sequence, read N- to C-terminus: 2-C-methyl-D-erythritol 4-phosphate cytidylyltransferase (234 aa).

The protein belongs to the IspD/TarI cytidylyltransferase family. IspD subfamily.

It catalyses the reaction 2-C-methyl-D-erythritol 4-phosphate + CTP + H(+) = 4-CDP-2-C-methyl-D-erythritol + diphosphate. It participates in isoprenoid biosynthesis; isopentenyl diphosphate biosynthesis via DXP pathway; isopentenyl diphosphate from 1-deoxy-D-xylulose 5-phosphate: step 2/6. Functionally, catalyzes the formation of 4-diphosphocytidyl-2-C-methyl-D-erythritol from CTP and 2-C-methyl-D-erythritol 4-phosphate (MEP). The protein is 2-C-methyl-D-erythritol 4-phosphate cytidylyltransferase of Syntrophus aciditrophicus (strain SB).